The primary structure comprises 29 residues: Cytochrome b6-f complex subunit 8 (29 aa).

The helical transmembrane segment at 3 to 23 (ILSLGWAALMTMFTFSLALTV) threads the bilayer.

It belongs to the PetN family. As to quaternary structure, the 4 large subunits of the cytochrome b6-f complex are cytochrome b6, subunit IV (17 kDa polypeptide, PetD), cytochrome f and the Rieske protein, while the 4 small subunits are PetG, PetL, PetM and PetN. The complex functions as a dimer.

The protein resides in the plastid. Its subcellular location is the chloroplast thylakoid membrane. Its function is as follows. Component of the cytochrome b6-f complex, which mediates electron transfer between photosystem II (PSII) and photosystem I (PSI), cyclic electron flow around PSI, and state transitions. This chain is Cytochrome b6-f complex subunit 8, found in Phaeodactylum tricornutum (strain CCAP 1055/1).